A 215-amino-acid chain; its full sequence is 3-isopropylmalate dehydratase small subunit (215 aa).

This sequence belongs to the LeuD family. LeuD type 1 subfamily. Heterodimer of LeuC and LeuD.

It catalyses the reaction (2R,3S)-3-isopropylmalate = (2S)-2-isopropylmalate. Its pathway is amino-acid biosynthesis; L-leucine biosynthesis; L-leucine from 3-methyl-2-oxobutanoate: step 2/4. In terms of biological role, catalyzes the isomerization between 2-isopropylmalate and 3-isopropylmalate, via the formation of 2-isopropylmaleate. This is 3-isopropylmalate dehydratase small subunit from Stutzerimonas stutzeri (strain A1501) (Pseudomonas stutzeri).